The following is a 465-amino-acid chain: Phospholipase A1-II 5 (465 aa).

The active-site Acyl-ester intermediate is Ser-233. Active-site charge relay system residues include Ser-233, Asp-297, and His-336.

It belongs to the AB hydrolase superfamily. Lipase family.

It localises to the cytoplasm. Functionally, acylhydrolase that catalyzes the hydrolysis of phospholipids at the sn-1 position. This Oryza sativa subsp. indica (Rice) protein is Phospholipase A1-II 5.